The sequence spans 502 residues: Glycerol kinase (502 aa).

Position 14 (T14) interacts with ADP. ATP is bound by residues T14, T15, and S16. T14 is a binding site for sn-glycerol 3-phosphate. R18 contacts ADP. Residues R84, E85, and Y136 each contribute to the sn-glycerol 3-phosphate site. R84, E85, and Y136 together coordinate glycerol. H232 is subject to Phosphohistidine; by HPr. D246 is a binding site for sn-glycerol 3-phosphate. Glycerol contacts are provided by D246 and Q247. 2 residues coordinate ADP: T268 and G311. 4 residues coordinate ATP: T268, G311, Q315, and G412. Residues G412 and N416 each coordinate ADP.

It belongs to the FGGY kinase family. Homotetramer and homodimer (in equilibrium). The phosphoenolpyruvate-dependent sugar phosphotransferase system (PTS), including enzyme I, and histidine-containing protein (HPr) are required for the phosphorylation, which leads to the activation of the enzyme.

The catalysed reaction is glycerol + ATP = sn-glycerol 3-phosphate + ADP + H(+). It participates in polyol metabolism; glycerol degradation via glycerol kinase pathway; sn-glycerol 3-phosphate from glycerol: step 1/1. Activated by phosphorylation and inhibited by fructose 1,6-bisphosphate (FBP). Its function is as follows. Key enzyme in the regulation of glycerol uptake and metabolism. Catalyzes the phosphorylation of glycerol to yield sn-glycerol 3-phosphate. In Streptococcus pneumoniae (strain ATCC 700669 / Spain 23F-1), this protein is Glycerol kinase.